Reading from the N-terminus, the 217-residue chain is Octanoyltransferase (217 aa).

Residues 31-206 (KSVMDEAWLL…ELVSRLGYAE (176 aa)) enclose the BPL/LPL catalytic domain. Substrate contacts are provided by residues 70-77 (RGGQVTYH), 137-139 (SLG), and 150-152 (GLA). Cys-168 acts as the Acyl-thioester intermediate in catalysis.

It belongs to the LipB family.

It is found in the cytoplasm. It carries out the reaction octanoyl-[ACP] + L-lysyl-[protein] = N(6)-octanoyl-L-lysyl-[protein] + holo-[ACP] + H(+). Its pathway is protein modification; protein lipoylation via endogenous pathway; protein N(6)-(lipoyl)lysine from octanoyl-[acyl-carrier-protein]: step 1/2. Its function is as follows. Catalyzes the transfer of endogenously produced octanoic acid from octanoyl-acyl-carrier-protein onto the lipoyl domains of lipoate-dependent enzymes. Lipoyl-ACP can also act as a substrate although octanoyl-ACP is likely to be the physiological substrate. The sequence is that of Octanoyltransferase from Pseudomonas aeruginosa (strain UCBPP-PA14).